The primary structure comprises 566 residues: Urease subunit alpha (566 aa).

Residues 128–566 (GGIDTHIHWI…LPMAQRYFLF (439 aa)) enclose the Urease domain. Histidine 133, histidine 135, and lysine 216 together coordinate Ni(2+). Lysine 216 carries the post-translational modification N6-carboxylysine. Histidine 218 lines the substrate pocket. Histidine 245 and histidine 271 together coordinate Ni(2+). Catalysis depends on histidine 319, which acts as the Proton donor. Aspartate 359 lines the Ni(2+) pocket.

The protein belongs to the metallo-dependent hydrolases superfamily. Urease alpha subunit family. Heterotrimer of UreA (gamma), UreB (beta) and UreC (alpha) subunits. Three heterotrimers associate to form the active enzyme. Ni cation serves as cofactor. In terms of processing, carboxylation allows a single lysine to coordinate two nickel ions.

The protein localises to the cytoplasm. The enzyme catalyses urea + 2 H2O + H(+) = hydrogencarbonate + 2 NH4(+). The protein operates within nitrogen metabolism; urea degradation; CO(2) and NH(3) from urea (urease route): step 1/1. The protein is Urease subunit alpha of Acinetobacter baylyi (strain ATCC 33305 / BD413 / ADP1).